We begin with the raw amino-acid sequence, 104 residues long: Large ribosomal subunit protein bL21 (104 aa).

This sequence belongs to the bacterial ribosomal protein bL21 family. In terms of assembly, part of the 50S ribosomal subunit. Contacts protein L20.

In terms of biological role, this protein binds to 23S rRNA in the presence of protein L20. The chain is Large ribosomal subunit protein bL21 from Helicobacter hepaticus (strain ATCC 51449 / 3B1).